Reading from the N-terminus, the 451-residue chain is Glycosyltransferase-like At2g41451 (451 aa).

The signal sequence occupies residues Met-1–Ala-23. Asn-36, Asn-137, Asn-168, Asn-441, and Asn-444 each carry an N-linked (GlcNAc...) asparagine glycan. The 237-residue stretch at Gln-109–Ser-345 folds into the GT92 domain.

It belongs to the glycosyltransferase 92 family.

It localises to the secreted. It is found in the cell wall. The protein localises to the cytoplasm. Its subcellular location is the cell membrane. Its function is as follows. Involved in the coordination between cell elongation and cellulose synthesis by promoting the expression of genes involved in cell elongation and cellulose synthesis. Acts as a regulator of plasmodesmatal permeability. Maybe a glycosyltransferase. This is Glycosyltransferase-like At2g41451 from Arabidopsis thaliana (Mouse-ear cress).